A 64-amino-acid chain; its full sequence is Large ribosomal subunit protein bL35 (64 aa).

Basic residues predominate over residues 1-17; that stretch reads MKQKTHSGIKKRIKKTG. The segment at 1–64 is disordered; sequence MKQKTHSGIK…KRVNRLLGEG (64 aa). Residues 21–33 show a composition bias toward basic and acidic residues; sequence LRREQANRRHLLE.

This sequence belongs to the bacterial ribosomal protein bL35 family.

The polypeptide is Large ribosomal subunit protein bL35 (Corynebacterium kroppenstedtii (strain DSM 44385 / JCM 11950 / CIP 105744 / CCUG 35717)).